A 272-amino-acid polypeptide reads, in one-letter code: S-adenosylmethionine decarboxylase proenzyme (272 aa).

Ser-117 acts as the Schiff-base intermediate with substrate; via pyruvic acid in catalysis. Residue Ser-117 is modified to Pyruvic acid (Ser); by autocatalysis. His-122 acts as the Proton acceptor; for processing activity in catalysis. Cys-145 acts as the Proton donor; for catalytic activity in catalysis.

Belongs to the prokaryotic AdoMetDC family. Type 2 subfamily. Heterooctamer of four alpha and four beta chains arranged as a tetramer of alpha/beta heterodimers. Pyruvate is required as a cofactor. Is synthesized initially as an inactive proenzyme. Formation of the active enzyme involves a self-maturation process in which the active site pyruvoyl group is generated from an internal serine residue via an autocatalytic post-translational modification. Two non-identical subunits are generated from the proenzyme in this reaction, and the pyruvate is formed at the N-terminus of the alpha chain, which is derived from the carboxyl end of the proenzyme. The post-translation cleavage follows an unusual pathway, termed non-hydrolytic serinolysis, in which the side chain hydroxyl group of the serine supplies its oxygen atom to form the C-terminus of the beta chain, while the remainder of the serine residue undergoes an oxidative deamination to produce ammonia and the pyruvoyl group blocking the N-terminus of the alpha chain.

The enzyme catalyses S-adenosyl-L-methionine + H(+) = S-adenosyl 3-(methylsulfanyl)propylamine + CO2. Its pathway is amine and polyamine biosynthesis; S-adenosylmethioninamine biosynthesis; S-adenosylmethioninamine from S-adenosyl-L-methionine: step 1/1. Its function is as follows. Catalyzes the decarboxylation of S-adenosylmethionine to S-adenosylmethioninamine (dcAdoMet), the propylamine donor required for the synthesis of the polyamines spermine and spermidine from the diamine putrescine. This chain is S-adenosylmethionine decarboxylase proenzyme, found in Halorhodospira halophila (strain DSM 244 / SL1) (Ectothiorhodospira halophila (strain DSM 244 / SL1)).